A 644-amino-acid chain; its full sequence is Replication protein E1 (644 aa).

Positions Lys86–Lys88 match the Nuclear localization signal motif. A disordered region spans residues Gln146–Asp177. Residues Ser159 to Glu173 show a composition bias toward low complexity. A DNA-binding region region spans residues Cys179 to Asp345. Residues Ile444–Val594 form the SF3 helicase domain. An ATP-binding site is contributed by Gly470–Ser477. Lys551 participates in a covalent cross-link: Glycyl lysine isopeptide (Lys-Gly) (interchain with G-Cter in SUMO).

This sequence belongs to the papillomaviridae E1 protein family. As to quaternary structure, can form hexamers. Interacts with E2 protein; this interaction increases E1 DNA binding specificity. Interacts with host DNA polymerase subunit POLA2. Interacts with host single stranded DNA-binding protein RPA1. Interacts with host TOP1; this interaction stimulates the enzymatic activity of TOP1. Phosphorylated. In terms of processing, sumoylated.

Its subcellular location is the host nucleus. It catalyses the reaction Couples ATP hydrolysis with the unwinding of duplex DNA by translocating in the 3'-5' direction.. The catalysed reaction is ATP + H2O = ADP + phosphate + H(+). Functionally, ATP-dependent DNA 3'-5' helicase required for initiation of viral DNA replication. It forms a complex with the viral E2 protein. The E1-E2 complex binds to the replication origin which contains binding sites for both proteins. During the initial step, a dimer of E1 interacts with a dimer of protein E2 leading to a complex that binds the viral origin of replication with high specificity. Then, a second dimer of E1 displaces the E2 dimer in an ATP-dependent manner to form the E1 tetramer. Following this, two E1 monomers are added to each half of the site, which results in the formation of two E1 trimers on the viral ori. Subsequently, two hexamers will be created. The double hexamer acts as a bi-directional helicase machinery and unwinds the viral DNA and then recruits the host DNA polymerase to start replication. This chain is Replication protein E1, found in Homo sapiens (Human).